Consider the following 809-residue polypeptide: Pentatricopeptide repeat-containing protein At1g11290, chloroplastic (809 aa).

The transit peptide at 1-46 (MSSQLVQFSTVPQIPNPPSRHRHFLSERNYIPANVYEHPAALLLER) directs the protein to the chloroplast. 16 PPR repeats span residues 68-98 (EHFF…IDSK), 99-133 (LNVL…DVEP), 134-168 (VVYN…GFSL), 169-199 (DLFA…MPER), 200-234 (DLVS…NLKP), 235-269 (SFIT…GFDS), 270-300 (LVNI…MLER), 301-335 (NVVS…GVKP), 336-370 (TDVS…GLDR), 371-401 (NVSV…LQSR), 402-436 (TLVS…TVKP), 437-471 (DTFT…CLDK), 472-502 (NVFV…MSER), 503-537 (HVTT…TIKP), 538-568 (NGVT…MKEN), and 574-604 (SMDH…MPVK). The type E motif stretch occupies residues 609 to 684 (VYGAMLGACQ…TPGCSMVEIK (76 aa)). The type E(+) motif stretch occupies residues 685-715 (NEVHSFFSGSTAHPDSKKIYAFLEKLICHIK). The interval 716-809 (EAGYVPDTNL…NGACSCGDYW (94 aa)) is type DYW motif.

It belongs to the PPR family. PCMP-H subfamily.

It is found in the plastid. The protein resides in the chloroplast. Functionally, involved in multiple sites RNA editing events in chloroplasts. Involved in the editing of the site 7 of ndhB (ndhB-7) and site 5 of ndhD (ndhD-5) transcripts, which are two plastid-encoded subunits of the chloroplast NAD(P)H dehydrogenase (NDH) complex. Involved in the editing of the site 3 of rpoB (rpoB-3) transcript. Required for the activity of the NDH complex of the photosynthetic electron transport chain. Possesses low endoribonuclease activity in vitro. The sequence is that of Pentatricopeptide repeat-containing protein At1g11290, chloroplastic (PCMP-H40) from Arabidopsis thaliana (Mouse-ear cress).